A 92-amino-acid polypeptide reads, in one-letter code: Small ribosomal subunit protein uS19 (92 aa).

Belongs to the universal ribosomal protein uS19 family.

Its function is as follows. Protein S19 forms a complex with S13 that binds strongly to the 16S ribosomal RNA. The protein is Small ribosomal subunit protein uS19 of Hyphomonas neptunium (strain ATCC 15444).